Here is a 104-residue protein sequence, read N- to C-terminus: Pterin-4-alpha-carbinolamine dehydratase (104 aa).

Ala-2 is modified (N-acetylalanine). Substrate contacts are provided by residues 61–63 and 78–81; these read DHH and STHE.

The protein belongs to the pterin-4-alpha-carbinolamine dehydratase family. As to quaternary structure, homotetramer and homodimer. Heterotetramer with HNF1A; formed by a dimer of dimers. Interacts with HNF1B (via HNF-p1 domain); the interaction increases HNF1B transactivation activity.

The protein localises to the cytoplasm. It is found in the nucleus. The catalysed reaction is (4aS,6R)-4a-hydroxy-L-erythro-5,6,7,8-tetrahydrobiopterin = (6R)-L-erythro-6,7-dihydrobiopterin + H2O. Involved in tetrahydrobiopterin biosynthesis. Seems to both prevent the formation of 7-pterins and accelerate the formation of quinonoid-BH2. Coactivator for HNF1A-dependent transcription. Regulates the dimerization of homeodomain protein HNF1A and enhances its transcriptional activity. Also acts as a coactivator for HNF1B-dependent transcription. In Rattus norvegicus (Rat), this protein is Pterin-4-alpha-carbinolamine dehydratase (Pcbd1).